The sequence spans 292 residues: Intermediate transcription factor 3 small subunit (292 aa).

Belongs to the orthopoxvirus OPG134 family. In terms of assembly, heterodimer of a 45 kDa (A23R) and a 32 kDa (A8R) subunit to form the virus intermediate transcription factor (VITF)-3.

Acts with RNA polymerase to initiate transcription from intermediate gene promoters. The sequence is that of Intermediate transcription factor 3 small subunit (OPG134) from Monkeypox virus.